The primary structure comprises 1061 residues: NACHT, LRR and PYD domains-containing protein 12 (1061 aa).

The region spanning 1-95 is the Pyrin domain; that stretch reads MLRTAGRDGL…WERGQREDLV (95 aa). Positions 129–201 constitute an FISNA domain; sequence YRDYVRRKFR…SPIKIETLFE (73 aa). The 318-residue stretch at 211-528 folds into the NACHT domain; that stretch reads RTVVMQGAAG…EFFAAMYYIL (318 aa). 217–224 provides a ligand contact to ATP; sequence GAAGIGKS. LRR repeat units follow at residues 828 to 848, 857 to 878, 885 to 906, 914 to 935, 942 to 962, 971 to 992, 999 to 1020, and 1028 to 1049; these read HLVE…RLLC, RLRT…ELAS, SLRE…LLCE, KLQT…GLSV, NLRE…WLLA, RLQK…NLYF, TLTD…LLCK, and KLRV…RLAA.

The protein belongs to the NLRP family. As to quaternary structure, interacts (via pyrin domain) with ASC. Interacts (via pyrin domain) with FAF1 (via UBA domain). Interacts with MAP3K14; this interaction promotes proteasomal degradation of MAP3K14. Interacts with NOD2; this interaction promotes degradation of NOD2 through the ubiquitin-proteasome pathway. Interacts with HSPA1A and HSPA8. Interacts with HSP90AA1. Interacts with TRIM25; this interaction inhibits RIGI-mediated signaling pathway. Detected only in peripheral blood leukocytes, predominantly in eosinophils and granulocytes, and at lower levels in monocytes.

It localises to the cytoplasm. Its function is as follows. Plays an essential role as an potent mitigator of inflammation. Primarily expressed in dendritic cells and macrophages, inhibits both canonical and non-canonical NF-kappa-B and ERK activation pathways. Functions as a negative regulator of NOD2 by targeting it to degradation via the proteasome pathway. In turn, promotes bacterial tolerance. Also inhibits the RIGI-mediated immune signaling against RNA viruses by reducing the E3 ubiquitin ligase TRIM25-mediated 'Lys-63'-linked RIGI activation but enhancing the E3 ubiquitin ligase RNF125-mediated 'Lys-48'-linked RIGI degradation. Also acts as a negative regulator of inflammatory response to mitigate obesity and obesity-associated diseases in adipose tissue. This Homo sapiens (Human) protein is NACHT, LRR and PYD domains-containing protein 12 (NLRP12).